Consider the following 227-residue polypeptide: tRNA (guanine-N(7)-)-methyltransferase (227 aa).

Positions 60, 85, 112, and 135 each coordinate S-adenosyl-L-methionine. Asp-135 is an active-site residue. Substrate contacts are provided by residues Lys-139, Asp-171, and 206-209; that span reads TKFE.

This sequence belongs to the class I-like SAM-binding methyltransferase superfamily. TrmB family.

The catalysed reaction is guanosine(46) in tRNA + S-adenosyl-L-methionine = N(7)-methylguanosine(46) in tRNA + S-adenosyl-L-homocysteine. It participates in tRNA modification; N(7)-methylguanine-tRNA biosynthesis. Catalyzes the formation of N(7)-methylguanine at position 46 (m7G46) in tRNA. The protein is tRNA (guanine-N(7)-)-methyltransferase of Thiobacillus denitrificans (strain ATCC 25259 / T1).